Here is a 126-residue protein sequence, read N- to C-terminus: UPF0102 protein P9303_16141 (126 aa).

This sequence belongs to the UPF0102 family.

The chain is UPF0102 protein P9303_16141 from Prochlorococcus marinus (strain MIT 9303).